The following is a 325-amino-acid chain: Beta-ketoacyl-[acyl-carrier-protein] synthase III (325 aa).

Active-site residues include Cys112 and His250. The segment at Gln251–Arg255 is ACP-binding. Asn280 is a catalytic residue.

The protein belongs to the thiolase-like superfamily. FabH family. As to quaternary structure, homodimer.

It localises to the cytoplasm. It carries out the reaction malonyl-[ACP] + acetyl-CoA + H(+) = 3-oxobutanoyl-[ACP] + CO2 + CoA. It participates in lipid metabolism; fatty acid biosynthesis. Functionally, catalyzes the condensation reaction of fatty acid synthesis by the addition to an acyl acceptor of two carbons from malonyl-ACP. Catalyzes the first condensation reaction which initiates fatty acid synthesis and may therefore play a role in governing the total rate of fatty acid production. Possesses both acetoacetyl-ACP synthase and acetyl transacylase activities. Its substrate specificity determines the biosynthesis of branched-chain and/or straight-chain of fatty acids. This is Beta-ketoacyl-[acyl-carrier-protein] synthase III from Lactococcus lactis subsp. cremoris (strain SK11).